The following is a 274-amino-acid chain: 2,3,4,5-tetrahydropyridine-2,6-dicarboxylate N-succinyltransferase (274 aa).

Belongs to the transferase hexapeptide repeat family.

It localises to the cytoplasm. It catalyses the reaction (S)-2,3,4,5-tetrahydrodipicolinate + succinyl-CoA + H2O = (S)-2-succinylamino-6-oxoheptanedioate + CoA. Its pathway is amino-acid biosynthesis; L-lysine biosynthesis via DAP pathway; LL-2,6-diaminopimelate from (S)-tetrahydrodipicolinate (succinylase route): step 1/3. This Escherichia coli (strain SMS-3-5 / SECEC) protein is 2,3,4,5-tetrahydropyridine-2,6-dicarboxylate N-succinyltransferase.